The primary structure comprises 408 residues: CinA-like protein (408 aa).

This sequence belongs to the CinA family.

The polypeptide is CinA-like protein (Thermotoga maritima (strain ATCC 43589 / DSM 3109 / JCM 10099 / NBRC 100826 / MSB8)).